Consider the following 1249-residue polypeptide: LRR receptor-like serine/threonine-protein kinase GSO1 (1249 aa).

Residues 1 to 18 (MQPLVLLLLFILCFSGLG) form the signal peptide. The Extracellular portion of the chain corresponds to 19-876 (QPGIINNDLQ…QQGLSARSVV (858 aa)). Residues Asn-77 and Asn-117 are each glycosylated (N-linked (GlcNAc...) asparagine). LRR repeat units lie at residues 94–118 (FDNL…LSNL), 119–142 (TSLE…LGSL), 144–166 (NIRS…LGNL), 168–190 (NLQM…LGRL), 191–214 (VRVQ…LGNC), 216–238 (DLTV…LGRL), 239–262 (ENLE…LGEM), 264–285 (QLQY…SLAD), 286–310 (LGNL…FWNM), 312–334 (QLLD…ICSN), 336–359 (TNLE…LSKC), 360–383 (QSLK…LFEL), 385–407 (ELTD…ISNL), 408–431 (TNLQ…ISAL), 433–455 (KLEV…IGNC), 457–479 (SLKM…IGRL), 480–503 (KELN…LGNC), 505–527 (QLNI…FGFL), 528–551 (KGLE…LISL), 553–574 (NLTR…LCGS), 576–598 (SYLS…LGNS), 599–622 (QNLD…LGKI), 623–646 (RELS…LVLC), 648–670 (KLTH…LGKL), 671–694 (SQLG…LFNC), 696–718 (KLLV…IGNL), 719–742 (GALN…MGKL), 744–766 (KLYE…IGQL), 767–791 (QDLQ…IGTL), 792–815 (SKLE…VGDM), and 817–838 (SLGY…QFSR). N-linked (GlcNAc...) asparagine glycans are attached at residues Asn-213, Asn-228, and Asn-248. Residues Asn-298, Asn-309, and Asn-334 are each glycosylated (N-linked (GlcNAc...) asparagine). Asn-369, Asn-393, and Asn-406 each carry an N-linked (GlcNAc...) asparagine glycan. N-linked (GlcNAc...) asparagine glycosylation is present at Asn-454. Residues Asn-537, Asn-553, Asn-558, and Asn-565 are each glycosylated (N-linked (GlcNAc...) asparagine). 2 N-linked (GlcNAc...) asparagine glycosylation sites follow: Asn-693 and Asn-708. An N-linked (GlcNAc...) asparagine glycan is attached at Asn-779. A glycan (N-linked (GlcNAc...) asparagine) is linked at Asn-822. A helical membrane pass occupies residues 877–897 (IISAISALTAIGLMILVIALF). The Cytoplasmic portion of the chain corresponds to 898 to 1249 (FKQRHDFFKK…NNRTAGYKKL (352 aa)). Thr-948 bears the Phosphothreonine mark. The region spanning 951–1240 (LSEEFMIGSG…ACDSLLHVYN (290 aa)) is the Protein kinase domain. Residues 957–965 (IGSGGSGKV) and Lys-979 each bind ATP. Phosphotyrosine occurs at positions 1027 and 1071. Asp-1084 (proton acceptor) is an active-site residue. Tyr-1129 and Tyr-1136 each carry phosphotyrosine.

This sequence belongs to the protein kinase superfamily. Ser/Thr protein kinase family. In terms of assembly, interacts with CIF1 and CIF2. In terms of tissue distribution, mostly expressed in siliques, seeds, developing embryos and seedlings, detected in flower buds and roots, but not in leaves or stems.

The protein resides in the cell membrane. It carries out the reaction L-seryl-[protein] + ATP = O-phospho-L-seryl-[protein] + ADP + H(+). It catalyses the reaction L-threonyl-[protein] + ATP = O-phospho-L-threonyl-[protein] + ADP + H(+). In terms of biological role, together with GSO2, receptor-like serine/threonine-kinase required during the development of the epidermal surface in embryos and cotyledons. In coordination with GSO2, regulates root growth through control of cell division and cell fate specification. Controls seedling root growth by modulating sucrose response after germination. Receptor of the peptide hormones CIF1 and CIF2 required for contiguous Casparian strip diffusion barrier formation in roots. Required for localizing CASP proteins into the Casparian strip following an uninterrupted, ring-like domain, to trigger endodermal differentiation and thus regulate potassium ion (K) homeostasis. Involved in the maintenance of water transport and root pressure. May also be involved in the regulation of suberin accumulation in the endodermis. The polypeptide is LRR receptor-like serine/threonine-protein kinase GSO1 (Arabidopsis thaliana (Mouse-ear cress)).